We begin with the raw amino-acid sequence, 208 residues long: MSRRAAVKTPRAGAAARRGAVARRTKETDVAVELRLEPGEAAISTGLPFFDHMLDQISRHGGMALTVRAKGDLQVDAHHTVEDVGIGLGEALRQALEDKAGLARYGHAVVPLDEALVEAVVDLSGRPHLTFNAKLPSGKKFIGGYDVDLTQDFLQALVNHARICVHVNVRYGRNLHHVVEAIFKATARALRAATAREGTALPSTKGTL.

This sequence belongs to the imidazoleglycerol-phosphate dehydratase family.

The protein resides in the cytoplasm. It carries out the reaction D-erythro-1-(imidazol-4-yl)glycerol 3-phosphate = 3-(imidazol-4-yl)-2-oxopropyl phosphate + H2O. The protein operates within amino-acid biosynthesis; L-histidine biosynthesis; L-histidine from 5-phospho-alpha-D-ribose 1-diphosphate: step 6/9. The polypeptide is Imidazoleglycerol-phosphate dehydratase (Anaeromyxobacter dehalogenans (strain 2CP-1 / ATCC BAA-258)).